The chain runs to 396 residues: NADH-quinone oxidoreductase subunit D 1 (396 aa).

Belongs to the complex I 49 kDa subunit family. In terms of assembly, NDH-1 is composed of 14 different subunits. Subunits NuoB, C, D, E, F, and G constitute the peripheral sector of the complex.

It localises to the cell inner membrane. It catalyses the reaction a quinone + NADH + 5 H(+)(in) = a quinol + NAD(+) + 4 H(+)(out). In terms of biological role, NDH-1 shuttles electrons from NADH, via FMN and iron-sulfur (Fe-S) centers, to quinones in the respiratory chain. The immediate electron acceptor for the enzyme in this species is believed to be ubiquinone. Couples the redox reaction to proton translocation (for every two electrons transferred, four hydrogen ions are translocated across the cytoplasmic membrane), and thus conserves the redox energy in a proton gradient. This chain is NADH-quinone oxidoreductase subunit D 1, found in Rhizobium etli (strain ATCC 51251 / DSM 11541 / JCM 21823 / NBRC 15573 / CFN 42).